The primary structure comprises 282 residues: Cell cycle checkpoint protein RAD1 (282 aa).

The protein belongs to the rad1 family. Component of the toroidal 9-1-1 (RAD9-RAD1-HUS1) complex, composed of RAD9A, RAD1 and HUS1. The 9-1-1 complex associates with LIG1, POLB, FEN1, RAD17, HDAC1, RPA1 and RPA2. The 9-1-1 complex associates with the RAD17-RFC complex. RAD1 interacts with POLB, FEN1, HUS1, HUS1B, RAD9A and RAD9B. Interacts with DNAJC7. Interacts with RHNO1; interaction is direct. As to expression, expressed in testis, uterus, bladder, spleen, ovaries, lung, brain and muscle (at protein level).

The protein resides in the nucleus. Component of the 9-1-1 cell-cycle checkpoint response complex that plays a major role in DNA repair. The 9-1-1 complex is recruited to DNA lesion upon damage by the RAD17-replication factor C (RFC) clamp loader complex. Acts then as a sliding clamp platform on DNA for several proteins involved in long-patch base excision repair (LP-BER). The 9-1-1 complex stimulates DNA polymerase beta (POLB) activity by increasing its affinity for the 3'-OH end of the primer-template and stabilizes POLB to those sites where LP-BER proceeds; endonuclease FEN1 cleavage activity on substrates with double, nick, or gap flaps of distinct sequences and lengths; and DNA ligase I (LIG1) on long-patch base excision repair substrates. The 9-1-1 complex is necessary for the recruitment of RHNO1 to sites of double-stranded breaks (DSB) occurring during the S phase. This chain is Cell cycle checkpoint protein RAD1 (RAD1), found in Homo sapiens (Human).